The primary structure comprises 395 residues: S-adenosylmethionine synthase (395 aa).

His18 lines the ATP pocket. Position 20 (Asp20) interacts with Mg(2+). Position 46 (Glu46) interacts with K(+). L-methionine contacts are provided by Glu59 and Gln103. Residues 103–113 (QSADIAVGVDS) are flexible loop. ATP contacts are provided by residues 170–172 (DAK), 235–236 (KF), Asp244, 250–251 (RK), Ala267, and Lys271. Asp244 is a binding site for L-methionine. Lys275 is an L-methionine binding site.

Belongs to the AdoMet synthase family. Homotetramer; dimer of dimers. The cofactor is Mg(2+). Requires K(+) as cofactor.

The protein resides in the cytoplasm. It carries out the reaction L-methionine + ATP + H2O = S-adenosyl-L-methionine + phosphate + diphosphate. The protein operates within amino-acid biosynthesis; S-adenosyl-L-methionine biosynthesis; S-adenosyl-L-methionine from L-methionine: step 1/1. Functionally, catalyzes the formation of S-adenosylmethionine (AdoMet) from methionine and ATP. The overall synthetic reaction is composed of two sequential steps, AdoMet formation and the subsequent tripolyphosphate hydrolysis which occurs prior to release of AdoMet from the enzyme. The protein is S-adenosylmethionine synthase of Granulibacter bethesdensis (strain ATCC BAA-1260 / CGDNIH1).